Reading from the N-terminus, the 323-residue chain is NADH-ubiquinone oxidoreductase chain 1 (323 aa).

Transmembrane regions (helical) follow at residues 4–24, 73–93, 106–126, 150–170, 175–195, 226–246, 256–276, and 303–323; these read LFTVLELLSFLVPVLLAVAFL, YLFFLSPLLFMALALLLWNLM, LLLVLGLSSLSVYAILGSGWA, LALILLSLIIITSSFNLTYIM, FSWFALSCLPLFYIWFVSTLA, LFFIAEYANIILMNLFSVVIF, LFPLNVLTIGLKTTLLVFLFL, and IGALCATITIVLTLGIYLPLF.

The protein belongs to the complex I subunit 1 family.

Its subcellular location is the mitochondrion inner membrane. It catalyses the reaction a ubiquinone + NADH + 5 H(+)(in) = a ubiquinol + NAD(+) + 4 H(+)(out). Core subunit of the mitochondrial membrane respiratory chain NADH dehydrogenase (Complex I) that is believed to belong to the minimal assembly required for catalysis. Complex I functions in the transfer of electrons from NADH to the respiratory chain. The immediate electron acceptor for the enzyme is believed to be ubiquinone. This chain is NADH-ubiquinone oxidoreductase chain 1 (ND1), found in Paracentrotus lividus (Common sea urchin).